Here is a 42-residue protein sequence, read N- to C-terminus: MRDLKTYLSVAPVLSTLWFGSLAGLLIEINRFFPDALTFPFF.

The helical transmembrane segment at 7-27 (YLSVAPVLSTLWFGSLAGLLI) threads the bilayer.

Belongs to the PsaJ family.

Its subcellular location is the plastid. It is found in the chloroplast thylakoid membrane. May help in the organization of the PsaE and PsaF subunits. In Daucus carota (Wild carrot), this protein is Photosystem I reaction center subunit IX.